The chain runs to 342 residues: Dihydroorotase (342 aa).

2 residues coordinate Zn(2+): H13 and H15. Substrate contacts are provided by residues H15–R17 and N41. Positions 99, 136, and 174 each coordinate Zn(2+). K99 carries the post-translational modification N6-carboxylysine. H136 serves as a coordination point for substrate. L218 is a substrate binding site. D246 contacts Zn(2+). D246 is a catalytic residue. Substrate contacts are provided by H250 and A262.

The protein belongs to the metallo-dependent hydrolases superfamily. DHOase family. Class II DHOase subfamily. Homodimer. The cofactor is Zn(2+).

The enzyme catalyses (S)-dihydroorotate + H2O = N-carbamoyl-L-aspartate + H(+). The protein operates within pyrimidine metabolism; UMP biosynthesis via de novo pathway; (S)-dihydroorotate from bicarbonate: step 3/3. Catalyzes the reversible cyclization of carbamoyl aspartate to dihydroorotate. This Synechocystis sp. (strain ATCC 27184 / PCC 6803 / Kazusa) protein is Dihydroorotase.